The sequence spans 288 residues: Bifunctional protein FolD (288 aa).

NADP(+) contacts are provided by residues 168-170 (GRG), Thr195, and Val236.

The protein belongs to the tetrahydrofolate dehydrogenase/cyclohydrolase family. As to quaternary structure, homodimer.

The catalysed reaction is (6R)-5,10-methylene-5,6,7,8-tetrahydrofolate + NADP(+) = (6R)-5,10-methenyltetrahydrofolate + NADPH. It carries out the reaction (6R)-5,10-methenyltetrahydrofolate + H2O = (6R)-10-formyltetrahydrofolate + H(+). Its pathway is one-carbon metabolism; tetrahydrofolate interconversion. Catalyzes the oxidation of 5,10-methylenetetrahydrofolate to 5,10-methenyltetrahydrofolate and then the hydrolysis of 5,10-methenyltetrahydrofolate to 10-formyltetrahydrofolate. The polypeptide is Bifunctional protein FolD (Mycobacterium sp. (strain JLS)).